Here is a 197-residue protein sequence, read N- to C-terminus: GTP cyclohydrolase-2 (197 aa).

50–54 (RIHSE) contributes to the GTP binding site. Residues Cys55, Cys66, and Cys68 each contribute to the Zn(2+) site. GTP is bound by residues Gln71, 93–95 (EGR), and Thr115. Catalysis depends on Asp127, which acts as the Proton acceptor. The Nucleophile role is filled by Arg129. GTP contacts are provided by Thr150 and Lys155.

The protein belongs to the GTP cyclohydrolase II family. It depends on Zn(2+) as a cofactor.

It catalyses the reaction GTP + 4 H2O = 2,5-diamino-6-hydroxy-4-(5-phosphoribosylamino)-pyrimidine + formate + 2 phosphate + 3 H(+). Its pathway is cofactor biosynthesis; riboflavin biosynthesis; 5-amino-6-(D-ribitylamino)uracil from GTP: step 1/4. Catalyzes the conversion of GTP to 2,5-diamino-6-ribosylamino-4(3H)-pyrimidinone 5'-phosphate (DARP), formate and pyrophosphate. This chain is GTP cyclohydrolase-2, found in Neisseria meningitidis serogroup A / serotype 4A (strain DSM 15465 / Z2491).